A 165-amino-acid chain; its full sequence is Large ribosomal subunit protein uL10 (165 aa).

The protein belongs to the universal ribosomal protein uL10 family. Part of the ribosomal stalk of the 50S ribosomal subunit. The N-terminus interacts with L11 and the large rRNA to form the base of the stalk. The C-terminus forms an elongated spine to which L12 dimers bind in a sequential fashion forming a multimeric L10(L12)X complex.

Forms part of the ribosomal stalk, playing a central role in the interaction of the ribosome with GTP-bound translation factors. This Buchnera aphidicola subsp. Acyrthosiphon pisum (strain 5A) protein is Large ribosomal subunit protein uL10.